The chain runs to 91 residues: Large ribosomal subunit protein uL22 (91 aa).

It belongs to the universal ribosomal protein uL22 family. Part of the 50S ribosomal subunit.

In terms of biological role, this protein binds specifically to 23S rRNA; its binding is stimulated by other ribosomal proteins, e.g. L4, L17, and L20. It is important during the early stages of 50S assembly. It makes multiple contacts with different domains of the 23S rRNA in the assembled 50S subunit and ribosome. Its function is as follows. The globular domain of the protein is located near the polypeptide exit tunnel on the outside of the subunit, while an extended beta-hairpin is found that lines the wall of the exit tunnel in the center of the 70S ribosome. The sequence is that of Large ribosomal subunit protein uL22 (rplV) from Pigeon pea witches'-broom phytoplasma.